The sequence spans 235 residues: Ferric nitrobindin-like protein (235 aa).

Positions 1 to 59 are disordered; it reads MSDLASEGSDPAERASEHSNGNAPADRPARRSGDQAVADAAERAKATGSRNIPVLPDLP. A GXWXGXG motif is present at residues 85 to 91; the sequence is GVWRGEG.

The protein belongs to the nitrobindin family.

In Nocardia farcinica (strain IFM 10152), this protein is Ferric nitrobindin-like protein.